We begin with the raw amino-acid sequence, 226 residues long: 2-C-methyl-D-erythritol 4-phosphate cytidylyltransferase (226 aa).

The protein belongs to the IspD/TarI cytidylyltransferase family. IspD subfamily.

The catalysed reaction is 2-C-methyl-D-erythritol 4-phosphate + CTP + H(+) = 4-CDP-2-C-methyl-D-erythritol + diphosphate. Its pathway is isoprenoid biosynthesis; isopentenyl diphosphate biosynthesis via DXP pathway; isopentenyl diphosphate from 1-deoxy-D-xylulose 5-phosphate: step 2/6. Its function is as follows. Catalyzes the formation of 4-diphosphocytidyl-2-C-methyl-D-erythritol from CTP and 2-C-methyl-D-erythritol 4-phosphate (MEP). The protein is 2-C-methyl-D-erythritol 4-phosphate cytidylyltransferase of Thermosipho africanus (strain TCF52B).